Consider the following 336-residue polypeptide: Structure-specific endonuclease subunit SLX1 (336 aa).

One can recognise a GIY-YIG domain in the interval 21 to 104 (SFYGVYLLQS…QHCHETRHIK (84 aa)). A disordered region spans residues 37–57 (FYIGSTPDPPRRLRQHNGDLK). The segment at 214 to 290 (CALCLEPIEQ…PATVNRCCSC (77 aa)) adopts an SLX1-type zinc-finger fold.

The protein belongs to the SLX1 family. Forms a heterodimer with SLX4. The cofactor is a divalent metal cation.

Its subcellular location is the nucleus. Its function is as follows. Catalytic subunit of the SLX1-SLX4 structure-specific endonuclease that resolves DNA secondary structures generated during DNA repair and recombination. Has endonuclease activity towards branched DNA substrates, introducing single-strand cuts in duplex DNA close to junctions with ss-DNA. This Scheffersomyces stipitis (strain ATCC 58785 / CBS 6054 / NBRC 10063 / NRRL Y-11545) (Yeast) protein is Structure-specific endonuclease subunit SLX1.